Consider the following 111-residue polypeptide: Mitochondrial import inner membrane translocase subunit Tim10B (111 aa).

Positions 24 to 48 match the Twin CX3C motif motif; it reads CFNACARDYTTSTLTKDEGSCVSQC. Cystine bridges form between cysteine 24/cysteine 48 and cysteine 28/cysteine 44. Residues 73–111 are disordered; the sequence is KQGEQSPTEAIKSAKPEPAVPAPEATPVETTPVIEENKQ. Positions 94 to 105 are enriched in low complexity; it reads APEATPVETTPV.

Belongs to the small Tim family. As to quaternary structure, component of the TIM22 complex, whose core is composed of tim-22, associated with peripheral protein tin-9.2/tim-10b and the 70 kDa heterohexamer. In most cases, the 70 kDa complex is composed of TIMM9 and TIMM10.

It is found in the mitochondrion inner membrane. In terms of biological role, component of the TIM22 complex, a complex that mediates the import and insertion of multi-pass transmembrane proteins into the mitochondrial inner membrane. The TIM22 complex forms a twin-pore translocase that uses the membrane potential as the external driving force. In the TIM22 complex, it may act as a docking point for the soluble 70 kDa complex that guides the target proteins in transit through the aqueous mitochondrial intermembrane space. This Caenorhabditis elegans protein is Mitochondrial import inner membrane translocase subunit Tim10B (tin-9.2).